The chain runs to 166 residues: MDHGFYPSNLDGEGLRIGIVQARFNEPVCAELLEACVAELEKLGVEGEDTLVVTVPGALEIPLALQKMCESGQFDALVALGAVVRGETYHFELVSNESGAGITRVGLDFNVPIANGILTVDTDEQAHARTREKGRDCARAAVEMANLVAALDSLRGQEDEDEDDDE.

Residues Phe24, 58–60, and 82–84 each bind 5-amino-6-(D-ribitylamino)uracil; these read ALE and AVV. 87–88 lines the (2S)-2-hydroxy-3-oxobutyl phosphate pocket; sequence ET. The Proton donor role is filled by His90. Asn115 provides a ligand contact to 5-amino-6-(D-ribitylamino)uracil. Arg129 contributes to the (2S)-2-hydroxy-3-oxobutyl phosphate binding site.

Belongs to the DMRL synthase family.

The catalysed reaction is (2S)-2-hydroxy-3-oxobutyl phosphate + 5-amino-6-(D-ribitylamino)uracil = 6,7-dimethyl-8-(1-D-ribityl)lumazine + phosphate + 2 H2O + H(+). It functions in the pathway cofactor biosynthesis; riboflavin biosynthesis; riboflavin from 2-hydroxy-3-oxobutyl phosphate and 5-amino-6-(D-ribitylamino)uracil: step 1/2. Catalyzes the formation of 6,7-dimethyl-8-ribityllumazine by condensation of 5-amino-6-(D-ribitylamino)uracil with 3,4-dihydroxy-2-butanone 4-phosphate. This is the penultimate step in the biosynthesis of riboflavin. This Cupriavidus necator (strain ATCC 17699 / DSM 428 / KCTC 22496 / NCIMB 10442 / H16 / Stanier 337) (Ralstonia eutropha) protein is 6,7-dimethyl-8-ribityllumazine synthase.